Here is a 246-residue protein sequence, read N- to C-terminus: Ribonuclease 3 (246 aa).

One can recognise an RNase III domain in the interval 18–147 (FKELQKKIGI…FIGALYLDQG (130 aa)). E60 contributes to the Mg(2+) binding site. Residue D64 is part of the active site. The Mg(2+) site is built by D133 and E136. The active site involves E136. The DRBM domain occupies 173 to 242 (DFKSQLQELV…AQMALQKLKT (70 aa)).

Belongs to the ribonuclease III family. As to quaternary structure, homodimer. Mg(2+) serves as cofactor.

Its subcellular location is the cytoplasm. It carries out the reaction Endonucleolytic cleavage to 5'-phosphomonoester.. Digests double-stranded RNA. Involved in the processing of primary rRNA transcript to yield the immediate precursors to the large and small rRNAs (23S and 16S). Processes some mRNAs, and tRNAs when they are encoded in the rRNA operon. Processes pre-crRNA and tracrRNA of type II CRISPR loci if present in the organism. This Geobacillus sp. (strain WCH70) protein is Ribonuclease 3.